Reading from the N-terminus, the 541-residue chain is Carotenoid 9,10(9',10')-cleavage dioxygenase 1 (541 aa).

Positions 222, 270, 336, and 526 each coordinate Fe cation.

Belongs to the carotenoid oxygenase family. The cofactor is Fe(2+).

It catalyses the reaction all-trans-zeaxanthin + 2 O2 = 4,9-dimethyldodeca-2,4,6,8,10-pentaenedial + 2 (3R)-hydroxy-beta-ionone. Functionally, cleaves a variety of carotenoids at the 9-10 and 9'-10' double bonds. Probably not involved in abscisic acid biosynthesis. The sequence is that of Carotenoid 9,10(9',10')-cleavage dioxygenase 1 (CCD1) from Pisum sativum (Garden pea).